The primary structure comprises 512 residues: Matrix metalloproteinase-27 (512 aa).

An N-terminal signal peptide occupies residues 1–17 (MKSFLLLFLLFVTFSSA). A propeptide spans 18–98 (LPADQKMENE…PRCGVPDVGQ (81 aa)) (activation peptide). The Cysteine switch motif lies at 89-96 (PRCGVPDV). Cys91 serves as a coordination point for Zn(2+). Asn110 carries N-linked (GlcNAc...) asparagine glycosylation. Residues Asp121 and Asp155 each contribute to the Ca(2+) site. Zn(2+) is bound at residue His165. Residues Asp173, Gly174, and Val178 each coordinate Ca(2+). His181 provides a ligand contact to Zn(2+). 2 residues coordinate Ca(2+): Gly188 and Asp192. His194 serves as a coordination point for Zn(2+). 2 residues coordinate Ca(2+): Asp196 and Glu199. His216 contributes to the Zn(2+) binding site. Residue Glu217 is part of the active site. Residues His220 and His226 each contribute to the Zn(2+) site. 4 Hemopexin repeats span residues 276 to 325 (PHAC…WPSL), 326 to 371 (PADL…GFPR), 373 to 421 (VKKI…FPGI), and 422 to 465 (GLRV…WFQC). A disulfide bridge connects residues Cys279 and Cys465. Residue Asp286 coordinates Ca(2+). Ca(2+)-binding residues include Asp377 and Asp426. The interval 466–512 (KEPLNSSLDFHFNQEKAYSGEVETLHHQSLSLLIFGIVHLLNKICSY) is required for retention in the endoplasmic reticulum.

It belongs to the peptidase M10A family. Ca(2+) serves as cofactor. The cofactor is Zn(2+). Post-translationally, N-glycosylated.

The protein localises to the endoplasmic reticulum. Functionally, matrix metalloproteinases degrade protein components of the extracellular matrix such as fibronectin, laminin, gelatins and/or collagens. This chain is Matrix metalloproteinase-27 (MMP27), found in Tupaia belangeri (Common tree shrew).